Reading from the N-terminus, the 345-residue chain is N-acetyl-gamma-glutamyl-phosphate reductase (345 aa).

C149 is a catalytic residue.

Belongs to the NAGSA dehydrogenase family. Type 1 subfamily.

It localises to the cytoplasm. The enzyme catalyses N-acetyl-L-glutamate 5-semialdehyde + phosphate + NADP(+) = N-acetyl-L-glutamyl 5-phosphate + NADPH + H(+). It participates in amino-acid biosynthesis; L-arginine biosynthesis; N(2)-acetyl-L-ornithine from L-glutamate: step 3/4. Functionally, catalyzes the NADPH-dependent reduction of N-acetyl-5-glutamyl phosphate to yield N-acetyl-L-glutamate 5-semialdehyde. This Bacillus mycoides (strain KBAB4) (Bacillus weihenstephanensis) protein is N-acetyl-gamma-glutamyl-phosphate reductase.